Here is a 247-residue protein sequence, read N- to C-terminus: Orotidine 5'-phosphate decarboxylase (247 aa).

Substrate contacts are provided by residues D22, K44, 71–80 (DLKFHDIPNT), T131, R192, Q201, G221, and R222. Residue K73 is the Proton donor of the active site.

This sequence belongs to the OMP decarboxylase family. Type 1 subfamily. As to quaternary structure, homodimer.

The catalysed reaction is orotidine 5'-phosphate + H(+) = UMP + CO2. It functions in the pathway pyrimidine metabolism; UMP biosynthesis via de novo pathway; UMP from orotate: step 2/2. In terms of biological role, catalyzes the decarboxylation of orotidine 5'-monophosphate (OMP) to uridine 5'-monophosphate (UMP). The chain is Orotidine 5'-phosphate decarboxylase from Pectobacterium carotovorum subsp. carotovorum (strain PC1).